A 144-amino-acid chain; its full sequence is Large ribosomal subunit protein uL15 (144 aa).

The interval 1 to 48 (MIKLECLQDPSPRKRRTKLLGRGPSSGHGKTSGRGHKGDGSRSGYKRR) is disordered.

The protein belongs to the universal ribosomal protein uL15 family. In terms of assembly, part of the 50S ribosomal subunit.

Its function is as follows. Binds to the 23S rRNA. This is Large ribosomal subunit protein uL15 from Chlamydia trachomatis serovar L2 (strain ATCC VR-902B / DSM 19102 / 434/Bu).